The following is a 541-amino-acid chain: Halolysin-like extracellular serine protease Nep (541 aa).

Residues Met-1–Ala-33 constitute a signal peptide (tat-type signal). The propeptide occupies Thr-34–Val-121. The Peptidase S8 domain occupies Gln-130–Val-405. Active-site charge relay system residues include Asp-157, His-198, and Ser-351. The tract at residues Leu-403–Asp-453 is disordered. The span at Asp-410 to Asp-432 shows a compositional bias: acidic residues.

The protein belongs to the peptidase S8 family. Monomer. In terms of processing, exported by the Tat system. The position of the signal peptide cleavage has not been experimentally proven. After transport across the membrane, the propeptide is probably processed autocatalytically, yielding the mature fully active protease.

It localises to the secreted. With respect to regulation, dependent on high salt concentrations for activity and stability. Strongly inhibited by the serine protease inhibitors diisopropyl fluorophosphate (DFP), phenylmethyl sulfonylfluoride (PMSF) and chymostatin. Also inhibited by denaturing agents such as SDS, urea, and HCl guanidinium. Activated by thiol-containing reducing agents such as dithiotreitol (DTT) and 2-mercaptoethanol. In terms of biological role, serine protease that hydrolyzes large proteins such as casein and gelatin. Cleaves preferentially at the carboxyl terminus of Phe, Tyr or Leu. Is also able to catalyze peptide synthesis under different salt concentrations in the presence of dimethyl sulfoxide (DMSO). The chain is Halolysin-like extracellular serine protease Nep from Natrialba magadii.